The primary structure comprises 273 residues: uncharacterized protein (273 aa).

A compositionally biased stretch (basic residues) spans 1 to 10 (MSSKKVKYNP). Disordered regions lie at residues 1–32 (MSSKKVKYNPRKSASQNEATSASAGSKAFGFN) and 50–124 (EDVE…QSSP). 3 stretches are compositionally biased toward polar residues: residues 12 to 24 (KSASQNEATSASA), 55 to 64 (QSFNGKSSNL), and 92 to 124 (PQSSSQKPFASSTYNVELPTSPTKITNIGQSSP). Phosphoserine is present on S123.

The protein resides in the nucleus. It localises to the cytoplasm. It is found in the cytoskeleton. Its subcellular location is the spindle. This is an uncharacterized protein from Schizosaccharomyces pombe (strain 972 / ATCC 24843) (Fission yeast).